Consider the following 361-residue polypeptide: Phosphoserine aminotransferase (361 aa).

L-glutamate is bound at residue arginine 42. Residues 76-77 (AR), tryptophan 102, threonine 153, aspartate 173, and glutamine 196 each bind pyridoxal 5'-phosphate. Lysine 197 is subject to N6-(pyridoxal phosphate)lysine. 238–239 (NT) serves as a coordination point for pyridoxal 5'-phosphate.

The protein belongs to the class-V pyridoxal-phosphate-dependent aminotransferase family. SerC subfamily. As to quaternary structure, homodimer. It depends on pyridoxal 5'-phosphate as a cofactor.

The protein localises to the cytoplasm. It carries out the reaction O-phospho-L-serine + 2-oxoglutarate = 3-phosphooxypyruvate + L-glutamate. The catalysed reaction is 4-(phosphooxy)-L-threonine + 2-oxoglutarate = (R)-3-hydroxy-2-oxo-4-phosphooxybutanoate + L-glutamate. It participates in amino-acid biosynthesis; L-serine biosynthesis; L-serine from 3-phospho-D-glycerate: step 2/3. It functions in the pathway cofactor biosynthesis; pyridoxine 5'-phosphate biosynthesis; pyridoxine 5'-phosphate from D-erythrose 4-phosphate: step 3/5. Functionally, catalyzes the reversible conversion of 3-phosphohydroxypyruvate to phosphoserine and of 3-hydroxy-2-oxo-4-phosphonooxybutanoate to phosphohydroxythreonine. The polypeptide is Phosphoserine aminotransferase (Buchnera aphidicola subsp. Acyrthosiphon pisum (strain Tuc7)).